Here is a 489-residue protein sequence, read N- to C-terminus: Mitochondrial distribution and morphology protein 34 (489 aa).

The SMP-LTD domain occupies 1–205 (MSFNINWDSI…LPSVLYKFSQ (205 aa)).

This sequence belongs to the MDM34 family. Component of the ER-mitochondria encounter structure (ERMES) or MDM complex, composed of MMM1, MDM10, MDM12 and MDM34.

The protein localises to the mitochondrion outer membrane. Component of the ERMES/MDM complex, which serves as a molecular tether to connect the endoplasmic reticulum (ER) and mitochondria. Components of this complex are involved in the control of mitochondrial shape and protein biogenesis, and function in nonvesicular lipid trafficking between the ER and mitochondria. MDM34 is required for the interaction of the ER-resident membrane protein MMM1 and the outer mitochondrial membrane-resident beta-barrel protein MDM10. The chain is Mitochondrial distribution and morphology protein 34 from Komagataella phaffii (strain GS115 / ATCC 20864) (Yeast).